The sequence spans 62 residues: Translational regulator CsrA (62 aa).

It belongs to the CsrA/RsmA family. As to quaternary structure, homodimer; the beta-strands of each monomer intercalate to form a hydrophobic core, while the alpha-helices form wings that extend away from the core.

It is found in the cytoplasm. Its function is as follows. A key translational regulator that binds mRNA to regulate translation initiation and/or mRNA stability. Mediates global changes in gene expression, shifting from rapid growth to stress survival by linking envelope stress, the stringent response and the catabolite repression systems. Usually binds in the 5'-UTR; binding at or near the Shine-Dalgarno sequence prevents ribosome-binding, repressing translation, binding elsewhere in the 5'-UTR can activate translation and/or stabilize the mRNA. Its function is antagonized by small RNA(s). The chain is Translational regulator CsrA from Haemophilus ducreyi (strain 35000HP / ATCC 700724).